The following is a 293-amino-acid chain: MAAITASMVAELRAKTDAPMMECKKALTEADGDLAKAEELLRVKLGNKASKAASRVTAEGVVASFVGGNAGSLVELNCETDFVAKNDDFLAFSKTVAELVATQNPADVAALSALPLEGSTVDAVRLALVGKIGENVSIRRFVRFETANKIATYLHGARIGVIVEYTGAEEQVGKDVAMHIAAMKPVALSSADVPAELIDTERRVAEQKAAESGKPAEIVAKMVDGSVQKYLKEVSLLNQTFVKNDKQTIEQMLKAANAAVQKFALFVVGEGIEKRQDDFAAEVAAQVAAAKQQ.

The interval 80-83 (TDFV) is involved in Mg(2+) ion dislocation from EF-Tu.

This sequence belongs to the EF-Ts family.

The protein resides in the cytoplasm. In terms of biological role, associates with the EF-Tu.GDP complex and induces the exchange of GDP to GTP. It remains bound to the aminoacyl-tRNA.EF-Tu.GTP complex up to the GTP hydrolysis stage on the ribosome. The polypeptide is Elongation factor Ts (Burkholderia lata (strain ATCC 17760 / DSM 23089 / LMG 22485 / NCIMB 9086 / R18194 / 383)).